We begin with the raw amino-acid sequence, 203 residues long: Proteasome subunit beta 2 (203 aa).

Residues 1–9 (MGEEFQVGA) constitute a propeptide, removed in mature form; by autocatalysis. Catalysis depends on threonine 10, which acts as the Nucleophile.

Belongs to the peptidase T1B family. The 20S proteasome core is composed of 14 alpha and 14 beta subunits that assemble into four stacked heptameric rings, resulting in a barrel-shaped structure. The two inner rings, each composed of seven catalytic beta subunits, are sandwiched by two outer rings, each composed of seven alpha subunits. The catalytic chamber with the active sites is on the inside of the barrel. Has a gated structure, the ends of the cylinder being occluded by the N-termini of the alpha-subunits. Is capped at one or both ends by the proteasome regulatory ATPase, PAN.

The protein resides in the cytoplasm. The enzyme catalyses Cleavage of peptide bonds with very broad specificity.. With respect to regulation, the formation of the proteasomal ATPase PAN-20S proteasome complex, via the docking of the C-termini of PAN into the intersubunit pockets in the alpha-rings, triggers opening of the gate for substrate entry. Interconversion between the open-gate and close-gate conformations leads to a dynamic regulation of the 20S proteasome proteolysis activity. Functionally, component of the proteasome core, a large protease complex with broad specificity involved in protein degradation. The polypeptide is Proteasome subunit beta 2 (Pyrobaculum neutrophilum (strain DSM 2338 / JCM 9278 / NBRC 100436 / V24Sta) (Thermoproteus neutrophilus)).